A 245-amino-acid chain; its full sequence is Ribonuclease PH (245 aa).

Phosphate contacts are provided by residues Arg-86 and 124-126 (GTR).

The protein belongs to the RNase PH family. In terms of assembly, homohexameric ring arranged as a trimer of dimers.

It catalyses the reaction tRNA(n+1) + phosphate = tRNA(n) + a ribonucleoside 5'-diphosphate. Functionally, phosphorolytic 3'-5' exoribonuclease that plays an important role in tRNA 3'-end maturation. Removes nucleotide residues following the 3'-CCA terminus of tRNAs; can also add nucleotides to the ends of RNA molecules by using nucleoside diphosphates as substrates, but this may not be physiologically important. Probably plays a role in initiation of 16S rRNA degradation (leading to ribosome degradation) during starvation. This chain is Ribonuclease PH, found in Bacillus anthracis (strain A0248).